Reading from the N-terminus, the 181-residue chain is Alkyl hydroperoxide reductase AhpD (181 aa).

C131 (proton donor) is an active-site residue. An intrachain disulfide couples C131 to C134. C134 (cysteine sulfenic acid (-SOH) intermediate) is an active-site residue.

Belongs to the AhpD family.

It catalyses the reaction N(6)-[(R)-dihydrolipoyl]-L-lysyl-[lipoyl-carrier protein] + a hydroperoxide = N(6)-[(R)-lipoyl]-L-lysyl-[lipoyl-carrier protein] + an alcohol + H2O. In terms of biological role, antioxidant protein with alkyl hydroperoxidase activity. Required for the reduction of the AhpC active site cysteine residues and for the regeneration of the AhpC enzyme activity. The sequence is that of Alkyl hydroperoxide reductase AhpD from Rhodopseudomonas palustris (strain BisB18).